The following is a 680-amino-acid chain: NADPH--cytochrome P450 reductase (680 aa).

The Lumenal portion of the chain corresponds to 1-5 (MALDK). A helical membrane pass occupies residues 6-23 (LDLYVIITLVVAIAAYFA). The Cytoplasmic portion of the chain corresponds to 24 to 680 (KNQFLDQQQD…VQNRYQEDVW (657 aa)). The 145-residue stretch at 60–204 (TLLLFGSQTG…DFLAWKDNVF (145 aa)) folds into the Flavodoxin-like domain. Residues 66-71 (SQTGTA), 117-120 (ATYG), 152-161 (LGNSTYEFFN), and D187 contribute to the FMN site. Positions 264–509 (THPFLARIVK…NGPRGKFSKF (246 aa)) constitute an FAD-binding FR-type domain. R283 lines the NADP(+) pocket. Residues 439–442 (RYYS), 457–459 (TAV), and 473–476 (GVVT) each bind FAD. NADP(+) contacts are provided by residues T537, 599 to 600 (SR), 606 to 610 (KVYVQ), and D642. FAD is bound at residue W680.

This sequence belongs to the NADPH--cytochrome P450 reductase family. The protein in the N-terminal section; belongs to the flavodoxin family. It in the C-terminal section; belongs to the flavoprotein pyridine nucleotide cytochrome reductase family. FAD serves as cofactor. The cofactor is FMN.

Its subcellular location is the endoplasmic reticulum membrane. The protein resides in the mitochondrion outer membrane. It is found in the cell membrane. It carries out the reaction 2 oxidized [cytochrome P450] + NADPH = 2 reduced [cytochrome P450] + NADP(+) + H(+). In terms of biological role, this enzyme is required for electron transfer from NADP to cytochrome P450 in microsomes. It can also provide electron transfer to heme oxygenase and cytochrome B5. Involved in ergosterol biosynthesis. The chain is NADPH--cytochrome P450 reductase from Candida tropicalis (Yeast).